We begin with the raw amino-acid sequence, 966 residues long: Envelope glycoprotein (966 aa).

An N-terminal signal peptide occupies residues 1–83; sequence MDAGARYMRL…LLGINMCVSA (83 aa). Over 84 to 801 the chain is Extracellular; the sequence is EDYITLISDP…SLKDVFDWSG (718 aa). N-linked (GlcNAc...) asparagine; by host glycans are attached at residues asparagine 101, asparagine 134, asparagine 179, asparagine 220, asparagine 231, asparagine 334, asparagine 351, asparagine 357, asparagine 382, asparagine 403, asparagine 407, asparagine 438, asparagine 443, asparagine 449, asparagine 459, asparagine 469, asparagine 483, asparagine 495, asparagine 505, asparagine 511, asparagine 529, and asparagine 536. The fusion peptide stretch occupies residues 633–653; the sequence is GVGLVIMLVIMAIVAAAGASL. Coiled coils occupy residues 665–715 and 756–791; these read KAAV…RIML and RGLQ…EVWE. The segment at 699-715 is immunosuppression; the sequence is LEARVARVEAITDRIML. A helical transmembrane segment spans residues 802–822; it reads WFSWLKYIPIIVVGLLGCILI. Residues 823 to 966 lie on the Cytoplasmic side of the membrane; it reads RAVICVCQPL…LWCYKKSKSL (144 aa).

In terms of assembly, the mature envelope protein (Env) consists of a trimer of SU-TM heterodimers attached by noncovalent interactions or by a labile interchain disulfide bond. Specific enzymatic cleavages in vivo yield mature proteins. Envelope glycoproteins are synthesized as an inactive precursor that is N-glycosylated and processed likely by host cell furin or by a furin-like protease in the Golgi to yield the mature SU and TM proteins. The cleavage site between SU and TM requires the minimal sequence [KR]-X-[KR]-R.

The protein resides in the virion membrane. The protein localises to the host cell membrane. Functionally, the surface protein (SU) attaches the virus to the host cell by binding to its receptor. This interaction triggers the refolding of the transmembrane protein (TM) and is thought to activate its fusogenic potential by unmasking its fusion peptide. Fusion occurs at the host cell plasma membrane. The transmembrane protein (TM) acts as a class I viral fusion protein. Under the current model, the protein has at least 3 conformational states: pre-fusion native state, pre-hairpin intermediate state, and post-fusion hairpin state. During viral and target cell membrane fusion, the coiled coil regions (heptad repeats) assume a trimer-of-hairpins structure, positioning the fusion peptide in close proximity to the C-terminal region of the ectodomain. The formation of this structure appears to drive apposition and subsequent fusion of viral and target cell membranes. Membranes fusion leads to delivery of the nucleocapsid into the cytoplasm. The chain is Envelope glycoprotein (env) from Caprine arthritis encephalitis virus (strain Cork) (CAEV-Co).